A 371-amino-acid polypeptide reads, in one-letter code: Ferrochelatase (371 aa).

H218 and E299 together coordinate Fe cation.

This sequence belongs to the ferrochelatase family.

It localises to the cytoplasm. It catalyses the reaction heme b + 2 H(+) = protoporphyrin IX + Fe(2+). It functions in the pathway porphyrin-containing compound metabolism; protoheme biosynthesis; protoheme from protoporphyrin-IX: step 1/1. In terms of biological role, catalyzes the ferrous insertion into protoporphyrin IX. The sequence is that of Ferrochelatase from Cupriavidus taiwanensis (strain DSM 17343 / BCRC 17206 / CCUG 44338 / CIP 107171 / LMG 19424 / R1) (Ralstonia taiwanensis (strain LMG 19424)).